A 678-amino-acid chain; its full sequence is Methionine--tRNA ligase (678 aa).

The 'HIGH' region motif lies at 18-28; it reads PYANGPIHLGH. The Zn(2+) site is built by C149, C152, C162, and C165. A 'KMSKS' region motif is present at residues 334 to 338; sequence KMSKS. Residue K337 coordinates ATP. The tRNA-binding domain maps to 577–678; that stretch reads DFAKVDLRVA…SGATPGMRVM (102 aa).

Belongs to the class-I aminoacyl-tRNA synthetase family. MetG type 1 subfamily. As to quaternary structure, homodimer. Zn(2+) serves as cofactor.

The protein localises to the cytoplasm. It carries out the reaction tRNA(Met) + L-methionine + ATP = L-methionyl-tRNA(Met) + AMP + diphosphate. Is required not only for elongation of protein synthesis but also for the initiation of all mRNA translation through initiator tRNA(fMet) aminoacylation. The protein is Methionine--tRNA ligase of Marinobacter nauticus (strain ATCC 700491 / DSM 11845 / VT8) (Marinobacter aquaeolei).